Here is a 1317-residue protein sequence, read N- to C-terminus: MFINSFETKIKKKFSLLYEKLDDEDENEPSSSPSNSTNNFYKACPEDNSSKWSKISFNWVTKLIMKGYFKESLEMNDIYDLPELNKVQTTSKLLDDINFSNGSKYALIKHIYKNFLPKNKYALISNIFITIFIFLSPICLKFLINYISTDNDNEKSILKGILLCCLLCISILGQSISQELFYWFGMKNSFDVRGALTAKIFEKTLKLSNVSKKKYRSGKIMNIMSIDVENISEFFWTYYLDIVSHTLQILILLGLLCYVVGPSGLVGFGVMVIALPINTMLCTKSSNYLEKSLEYSDSRTNLTSELITNIRPFKMYAWENLFINKIEEQRKQELKFLFLRVLFWIFDHMMIETNATLVLVSTFATYSLTGNTMSLDVTFTAMTIFANLKLPLIYLPEDIYKAIGLMPSVKRIQNFLKSSESLKSKENNQNINFNNNNNNNNNNKNNNNNDDNDIIIENCTFQWNEPENNNLFEFNQSEDEEENEEEEEEENEENIKINENFDYKLNDINLIVPKGKLTMICGVVGSGKTSLVCGLIGEIYKLNGSVSGVPNNISFTSQQPFLLSASLRENILFGNEFDIERYKKVIESTALTKDIVNLAGLDLTEIGERGINLSGGQKQRISLARALYANSDCFIFDEPLSAVDPEVASHLFDHCIQGIDFKSILKTKEIKKNVENETDSEELIKNEIEIENEIIDVNNVISDKNDPNLIEKAKLLVKEDKNEGEVEFNVYKKYFSYGTSGVTLFITISLFFIGQAVYKVSDFWLAIWTERSIEGKSDSFYIGYYLLIIGIFVSLLMIRTYSLSRITFGIGKNLHSALLKSVTYASCRFFDTNPSGRILNRFSKDTSDIDIHMLDLLSEVSICFSELTIGLISIVFIIPIIIIPLTLLFIIYYIYQRLYRPSARELNRWESITLSPVFSLLQECYNGLLTIRTYKQESRFIKEMFDNININLGCIFYSFAVHRWISMRLEVMGCIMVFFTSLAAALFTSNNGLAALSVTTALSLNGYLSWGVRRIVELEVKMNSFQRIQSYIEIPKEGNKLISTGTNQVDSDGLKTISNGDLVNWPNKGIIEFKNVEIKYRPNSEPNLKDLSFKVQSSEKIGIVGRTGAGKTTIASSLFRMVECSKGLILIDGIDISKVQLQKLRSSIGIVPQDPFIFTGTIRSNIDPFNEFTDFEIWESIEKVKLKDAINSMPLKLETALQENGDNGFSYGQKQLLCLCRTILKNFKIILMDEATSSIDYHTAQLIKQTIQENFKDCTTLTIAHRLETIIDCNKIAVIDSGQLIEFDTPSNLMNIPNSKFNKLIKSQTDYSNNKIK.

Residues 119-404 (NKYALISNIF…LPEDIYKAIG (286 aa)) enclose the ABC transmembrane type-1 1 domain. 5 helical membrane-spanning segments follow: residues 127 to 147 (IFITIFIFLSPICLKFLINYI), 156 to 176 (SILKGILLCCLLCISILGQSI), 249 to 269 (ILILLGLLCYVVGPSGLVGFG), 341 to 361 (VLFWIFDHMMIETNATLVLVS), and 375 to 395 (LDVTFTAMTIFANLKLPLIYL). The tract at residues 426 to 451 (ENNQNINFNNNNNNNNNNKNNNNNDD) is disordered. The span at 427–449 (NNQNINFNNNNNNNNNNKNNNNN) shows a compositional bias: low complexity. One can recognise an ABC transporter 1 domain in the interval 490–710 (ENEENIKINE…ISDKNDPNLI (221 aa)). 522–529 (GVVGSGKT) is an ATP binding site. The next 5 helical transmembrane spans lie at 734 to 754 (YFSYGTSGVTLFITISLFFIG), 778 to 798 (DSFYIGYYLLIIGIFVSLLMI), 871 to 891 (LISIVFIIPIIIIPLTLLFII), 969 to 989 (LEVMGCIMVFFTSLAAALFTS), and 992 to 1012 (GLAALSVTTALSLNGYLSWGV). An ABC transmembrane type-1 2 domain is found at 744–1027 (LFITISLFFI…LEVKMNSFQR (284 aa)). The 236-residue stretch at 1071 to 1306 (IEFKNVEIKY…PNSKFNKLIK (236 aa)) folds into the ABC transporter 2 domain. Residue 1105–1112 (GRTGAGKT) coordinates ATP.

This sequence belongs to the ABC transporter superfamily. ABCC family. Conjugate transporter (TC 3.A.1.208) subfamily.

The protein localises to the membrane. The chain is ABC transporter C family member 14 (abcC14) from Dictyostelium discoideum (Social amoeba).